A 393-amino-acid polypeptide reads, in one-letter code: 2-methylcitrate synthase (393 aa).

Substrate contacts are provided by R92 and H207. Residue H242 is part of the active site. 275-279 (KIMGF) contacts CoA. The active site involves H281. R290 contributes to the substrate binding site. D332 is an active-site residue. Substrate contacts are provided by R357 and R376.

It belongs to the citrate synthase family. In terms of assembly, homodimer.

The catalysed reaction is propanoyl-CoA + oxaloacetate + H2O = (2S,3S)-2-methylcitrate + CoA + H(+). It carries out the reaction oxaloacetate + acetyl-CoA + H2O = citrate + CoA + H(+). It functions in the pathway organic acid metabolism; propanoate degradation. Its pathway is carbohydrate metabolism; tricarboxylic acid cycle; isocitrate from oxaloacetate: step 1/2. Its function is as follows. Involved in the catabolism of short chain fatty acids (SCFA) via the tricarboxylic acid (TCA)(acetyl degradation route) and via the 2-methylcitrate cycle I (propionate degradation route). Catalyzes the Claisen condensation of propionyl-CoA and oxaloacetate (OAA) to yield 2-methylcitrate (2-MC) and CoA. Also catalyzes the condensation of oxaloacetate with acetyl-CoA. This chain is 2-methylcitrate synthase (gltA1), found in Mycobacterium tuberculosis (strain ATCC 35801 / TMC 107 / Erdman).